The sequence spans 329 residues: Malate dehydrogenase (329 aa).

Residue 12-18 (GAAGQIG) participates in NAD(+) binding. Arg-95 and Arg-101 together coordinate substrate. NAD(+)-binding positions include Asn-108, Gln-115, and 132–134 (VGN). 2 residues coordinate substrate: Asn-134 and Arg-165. His-190 acts as the Proton acceptor in catalysis.

Belongs to the LDH/MDH superfamily. MDH type 2 family.

It carries out the reaction (S)-malate + NAD(+) = oxaloacetate + NADH + H(+). In terms of biological role, catalyzes the reversible oxidation of malate to oxaloacetate. The chain is Malate dehydrogenase from Polynucleobacter necessarius subsp. necessarius (strain STIR1).